A 477-amino-acid chain; its full sequence is 3-isopropylmalate dehydratase large subunit (477 aa).

Cysteine 352, cysteine 413, and cysteine 416 together coordinate [4Fe-4S] cluster.

The protein belongs to the aconitase/IPM isomerase family. LeuC type 1 subfamily. As to quaternary structure, heterodimer of LeuC and LeuD. The cofactor is [4Fe-4S] cluster.

The catalysed reaction is (2R,3S)-3-isopropylmalate = (2S)-2-isopropylmalate. It functions in the pathway amino-acid biosynthesis; L-leucine biosynthesis; L-leucine from 3-methyl-2-oxobutanoate: step 2/4. Functionally, catalyzes the isomerization between 2-isopropylmalate and 3-isopropylmalate, via the formation of 2-isopropylmaleate. The chain is 3-isopropylmalate dehydratase large subunit from Pseudomonas entomophila (strain L48).